Consider the following 541-residue polypeptide: Chlorophyllide a oxygenase, chloroplastic (541 aa).

Residues 114–151 (LAREFKSIGTLRKELAELQEELAKAHNQVHLSETRVSS) are a coiled coil. A compositionally biased stretch (polar residues) spans 178 to 192 (AECTSLAPSTSSASR). A disordered region spans residues 178–208 (AECTSLAPSTSSASRVVNKKPPRRSLNVSGP). Residues 220 to 320 (WYPVAFSSDL…CFEQEGMVWI (101 aa)) form the Rieske domain. [2Fe-2S] cluster contacts are provided by Cys-261, His-263, Cys-280, and His-283. The Fe cation site is built by Asp-359, Asp-363, His-366, and His-371.

Expressed in leaves and germinating seedlings, but not in sheaths and roots.

It localises to the plastid. The protein localises to the chloroplast membrane. The protein resides in the chloroplast thylakoid membrane. The catalysed reaction is chlorophyllide a + 2 NADPH + 2 O2 + 2 H(+) = chlorophyllide b + 2 NADP(+) + 3 H2O. Functionally, catalyzes a two-step oxygenase reaction involved in the synthesis of chlorophyll b. Acts specifically on the non-esterified chlorophyllide a and not on chlorophyll a. The polypeptide is Chlorophyllide a oxygenase, chloroplastic (CAO) (Oryza sativa subsp. japonica (Rice)).